Here is a 151-residue protein sequence, read N- to C-terminus: Deoxyuridine 5'-triphosphate nucleotidohydrolase (151 aa).

Residues 69 to 71 (RSG), Asn-82, 86 to 88 (LID), and Met-96 each bind substrate.

It belongs to the dUTPase family. Mg(2+) is required as a cofactor.

It catalyses the reaction dUTP + H2O = dUMP + diphosphate + H(+). It participates in pyrimidine metabolism; dUMP biosynthesis; dUMP from dCTP (dUTP route): step 2/2. Functionally, this enzyme is involved in nucleotide metabolism: it produces dUMP, the immediate precursor of thymidine nucleotides and it decreases the intracellular concentration of dUTP so that uracil cannot be incorporated into DNA. The chain is Deoxyuridine 5'-triphosphate nucleotidohydrolase from Blochmanniella floridana.